Reading from the N-terminus, the 286-residue chain is Bifunctional protein FolD (286 aa).

166–168 (GAS) lines the NADP(+) pocket.

The protein belongs to the tetrahydrofolate dehydrogenase/cyclohydrolase family. In terms of assembly, homodimer.

It catalyses the reaction (6R)-5,10-methylene-5,6,7,8-tetrahydrofolate + NADP(+) = (6R)-5,10-methenyltetrahydrofolate + NADPH. It carries out the reaction (6R)-5,10-methenyltetrahydrofolate + H2O = (6R)-10-formyltetrahydrofolate + H(+). It participates in one-carbon metabolism; tetrahydrofolate interconversion. Functionally, catalyzes the oxidation of 5,10-methylenetetrahydrofolate to 5,10-methenyltetrahydrofolate and then the hydrolysis of 5,10-methenyltetrahydrofolate to 10-formyltetrahydrofolate. This is Bifunctional protein FolD from Idiomarina loihiensis (strain ATCC BAA-735 / DSM 15497 / L2-TR).